The chain runs to 204 residues: Protein GrpE (204 aa).

Residues 1 to 55 (MSSKNNPESETKAKNKWEKVMEAEEEQEEGRGDGSQEMEPHREGLEFPSREKLEG) form a disordered region. Basic and acidic residues-rich tracts occupy residues 7–22 (PESE…KVME) and 29–55 (EGRG…KLEG).

The protein belongs to the GrpE family. As to quaternary structure, homodimer.

It is found in the cytoplasm. In terms of biological role, participates actively in the response to hyperosmotic and heat shock by preventing the aggregation of stress-denatured proteins, in association with DnaK and GrpE. It is the nucleotide exchange factor for DnaK and may function as a thermosensor. Unfolded proteins bind initially to DnaJ; upon interaction with the DnaJ-bound protein, DnaK hydrolyzes its bound ATP, resulting in the formation of a stable complex. GrpE releases ADP from DnaK; ATP binding to DnaK triggers the release of the substrate protein, thus completing the reaction cycle. Several rounds of ATP-dependent interactions between DnaJ, DnaK and GrpE are required for fully efficient folding. The polypeptide is Protein GrpE (Coxiella burnetii (strain RSA 331 / Henzerling II)).